The primary structure comprises 193 residues: Putative manganese efflux pump MntP (193 aa).

The next 6 helical transmembrane spans lie at 6–26 (VVFV…GIAC), 39–59 (VAGT…YAGL), 61–81 (IADV…TVIG), 106–126 (LGLL…GLTF), 132–152 (NIGL…YLGF), and 165–185 (WVGI…LAEH).

The protein belongs to the MntP (TC 9.B.29) family.

The protein localises to the cell membrane. Probably functions as a manganese efflux pump. The polypeptide is Putative manganese efflux pump MntP (Dehalococcoides mccartyi (strain ATCC BAA-2266 / KCTC 15142 / 195) (Dehalococcoides ethenogenes (strain 195))).